Reading from the N-terminus, the 304-residue chain is Protein Largen (304 aa).

The segment covering 1–22 has biased composition (low complexity); that stretch reads MSAKSKGNPSSSSAAEGPPAAS. Disordered regions lie at residues 1 to 27, 66 to 109, 114 to 133, and 236 to 304; these read MSAKSKGNPSSSSAAEGPPAASKTKVK, QLED…PPAH, LTVLRKPNPPPPPPRLTPVR, and EPVH…TTTV. Positions 33-70 form a coiled coil; it reads IVEDLELVLGDLKDVAKELKEVVDQIDTLTSDLQLEDE. Over residues 77–91 the composition is skewed to low complexity; the sequence is TDTLNSSSSGTTASS. Pro residues-rich tracts occupy residues 120-129 and 275-289; these read PNPPPPPPRL and FPPPTPATVPPPAAP.

Its function is as follows. Regulator of cell size that promotes cell size increase independently of mTOR and Hippo signaling pathways. Acts by stimulating the translation of specific mRNAs, including those encoding proteins affecting mitochondrial functions. Increases mitochondrial mass and respiration. The polypeptide is Protein Largen (Prr16) (Mus musculus (Mouse)).